Consider the following 410-residue polypeptide: Protein disulfide isomerase CRELD1 (410 aa).

A signal peptide spans 1-29 (MGMSRRMFLTVYGSLWLLLLLSRPGVSKP). Over 30-352 (QLCQTCQNLV…GLFDDITDDE (323 aa)) the chain is Extracellular. A CXXC motif is present at residues 32–35 (CQTC). Cystine bridges form between Cys-32–Cys-35, Cys-141–Cys-155, Cys-149–Cys-167, and Cys-169–Cys-178. An EGF-like 1 domain is found at 139-179 (LSCPGGTEKPCSGNGQCNGDGTRFGTGVCDCYTSYGGPVCM). FU repeat units follow at residues 194–243 (HLVC…DHCK) and 254–301 (SYEC…ELPK). A CXXC motif is present at residues 264–267 (CIGC). Disulfide bonds link Cys-264/Cys-267, Cys-295/Cys-309, Cys-302/Cys-318, and Cys-320/Cys-331. Residues 291-332 (DVDECDSELPKCKGSHEECVNTEGSFTCVCEKDYSRIDGMCR) form the EGF-like 2; calcium-binding domain. Residues 353 to 373 (VVVLQQMFFGVVICALATLAA) traverse the membrane as a helical segment. Residue Lys-374 is a topological domain, cytoplasmic. Residues 375–395 (GDMVFTAIFIGAVAAMAGYWL) traverse the membrane as a helical segment. Over 396 to 410 (SEKGDRALDSFMKGR) the chain is Extracellular.

The protein belongs to the CRELD family.

It localises to the membrane. It catalyses the reaction Catalyzes the rearrangement of -S-S- bonds in proteins.. Its function is as follows. Protein disulfide isomerase. Promotes the localization of acetylcholine receptors (AChRs) to the plasma membrane. The chain is Protein disulfide isomerase CRELD1 (creld1) from Xenopus tropicalis (Western clawed frog).